Here is a 349-residue protein sequence, read N- to C-terminus: Interferon regulatory factor 2 (349 aa).

The segment at residues Arg-5 to Pro-113 is a DNA-binding region (IRF tryptophan pentad repeat). 2 positions are modified to N6-acetyllysine: Lys-75 and Lys-78. Residue Lys-137 forms a Glycyl lysine isopeptide (Lys-Gly) (interchain with G-Cter in SUMO); alternate linkage. Residue Lys-137 forms a Glycyl lysine isopeptide (Lys-Gly) (interchain with G-Cter in SUMO2); alternate linkage. Residue Lys-166 forms a Glycyl lysine isopeptide (Lys-Gly) (interchain with G-Cter in SUMO) linkage. The residue at position 225 (Ser-225) is a Phosphoserine. Residues Tyr-230 to Val-239 are compositionally biased toward polar residues. The disordered stretch occupies residues Tyr-230–Arg-253. A Glycyl lysine isopeptide (Lys-Gly) (interchain with G-Cter in SUMO2) cross-link involves residue Lys-260. Residue Lys-293 forms a Glycyl lysine isopeptide (Lys-Gly) (interchain with G-Cter in SUMO) linkage. The interval Ser-303–Cys-349 is disordered.

It belongs to the IRF family. As to quaternary structure, interacts with BRD7, IRF2BP1 and IRF2BP2. Interacts with CREBBP in growing cells; the interaction acetylates IRF2 and regulates IRF2-dependent H4 promoter activity. Acetylated by CBP/ p300 during cell-growth. Acetylation on Lys-75 is required for stimulation of H4 promoter activity. Post-translationally, the major sites of sumoylation are Lys-137 and Lys-293. Sumoylation with SUMO1 increases its transcriptional repressor activity on IRF1 and diminishes its ability to activate ISRE and H4 promoter.

It is found in the nucleus. Specifically binds to the upstream regulatory region of type I IFN and IFN-inducible MHC class I genes (the interferon consensus sequence (ICS)) and represses those genes. Also acts as an activator for several genes including H4 and IL7. Constitutively binds to the ISRE promoter to activate IL7. Involved in cell cycle regulation through binding the site II (HiNF-M) promoter region of H4 and activating transcription during cell growth. Antagonizes IRF1 transcriptional activation. This Mus musculus (Mouse) protein is Interferon regulatory factor 2 (Irf2).